A 482-amino-acid chain; its full sequence is Magnesium-dependent glutamate N-prenyltransferase (482 aa).

Mg(2+) is bound by residues N351, T355, E359, and F366.

The protein belongs to the terpene synthase family. The cofactor is Mg(2+).

The enzyme catalyses (2E)-geranyl diphosphate + L-glutamate = N-geranyl-L-glutamate + diphosphate. Its pathway is secondary metabolite biosynthesis. Functionally, magnesium-dependent glutamate N-prenyltransferase: part of the gene cluster that mediates the biosynthesis of domoic acid (DA) and derivatives, natural products with neurochemical activity acting as ionotropic glutamate receptor (iGluR) agonists, thus being neurotoxins causing amnesic shellfish poisoning (ASP). Catalyzes the conversion of L-glutamic acid (L-Glu) to N-geranyl-L-glutamic acid (NGG) in the presence of geranyl diphosphate (GPP). Also able to catalyze the formation of farnesyl-L-glutamate from farnesyl diphosphate (FPP). Cannot use dimethylallyl diphosphate (DMAPP) as substrate. The polypeptide is Magnesium-dependent glutamate N-prenyltransferase (Pseudo-nitzschia multiseries (Marine planktonic diatom)).